The sequence spans 344 residues: MPIATPEVYNEMLDRAKEGGFAFPAINCTSSETINAALKGFAEAESDGIIQFSTGGAEFGSGLAVKNKVKGAVALAAFAHEAAKSYGINVALHTDHCQKEVLDEYVRPLLAISQERVDRGELPLFQSHMWDGSAVPIDENLEIAQELLAKAKAANIILEVEIGVVGGEEDGVEAKAGANLYTSPEDFEKTIDAIGTGEKGRYLLAATFGNVHGVYKPGNVKLRPEVLLEGQQVARKKLGLADDALPFDFVFHGGSGSEKEKIEEALTYGVIKMNVDTDTQYAFTRPIVSHMFENYNGVLKIDGEVGNKKAYDPRSYMKKAEQSMSERIIESCQDLKSVGKTTSK.

Residue Ser53 coordinates D-glyceraldehyde 3-phosphate. Asp95 serves as the catalytic Proton donor. Positions 96, 131, 161, and 212 each coordinate Zn(2+). Gly213 contributes to the dihydroxyacetone phosphate binding site. His252 contacts Zn(2+). Residues 253–255 (GGS) and 274–277 (NVDT) contribute to the dihydroxyacetone phosphate site.

It belongs to the class II fructose-bisphosphate aldolase family. Requires Zn(2+) as cofactor.

The enzyme catalyses beta-D-fructose 1,6-bisphosphate = D-glyceraldehyde 3-phosphate + dihydroxyacetone phosphate. The protein operates within carbohydrate degradation; glycolysis; D-glyceraldehyde 3-phosphate and glycerone phosphate from D-glucose: step 4/4. In terms of biological role, catalyzes the aldol condensation of dihydroxyacetone phosphate (DHAP or glycerone-phosphate) with glyceraldehyde 3-phosphate (G3P) to form fructose 1,6-bisphosphate (FBP) in gluconeogenesis and the reverse reaction in glycolysis. The polypeptide is Fructose-bisphosphate aldolase (fba) (Corynebacterium glutamicum (strain ATCC 13032 / DSM 20300 / JCM 1318 / BCRC 11384 / CCUG 27702 / LMG 3730 / NBRC 12168 / NCIMB 10025 / NRRL B-2784 / 534)).